A 106-amino-acid polypeptide reads, in one-letter code: Biogenesis of lysosome-related organelles complex 1 subunit 6 (106 aa).

Residues 78-106 (KKTSQLELSDTNIEDGSTTSTPTTTNKSQ) are disordered. Residues 82–93 (QLELSDTNIEDG) are compositionally biased toward polar residues. Over residues 94–106 (STTSTPTTTNKSQ) the composition is skewed to low complexity.

It belongs to the BLOC1S6 family. Homodimer (isoform 1). Component of the biogenesis of lysosome-related organelles complex-1 (BLOC-1) composed at least of blos-1, blos-2, blos-4, dsbn-1, glo-2, mutd-1 and snpn-1. Isoform 1 interacts with blos-1 and blos-4.

The protein localises to the cytoplasm. Its subcellular location is the endosome. Component of the biogenesis of lysosome-related organelles complex-1 (BLOC-1) involved in gut granule biogenesis. This Caenorhabditis elegans protein is Biogenesis of lysosome-related organelles complex 1 subunit 6 (glo-2).